Here is a 101-residue protein sequence, read N- to C-terminus: MKLFVLLCVFVLCLASQEKQQDREIPVLCPVCTSLVGKLIDLVLGGAVDKVTDYLETLCAKADGLVETLCTKIVSYGIDKLIEKILEGGSAKLICGLIHAC.

Positions 1-24 are cleaved as a signal peptide; the sequence is MKLFVLLCVFVLCLASQEKQQDRE. Positions 25 to 101 constitute a Saposin B-type domain; that stretch reads IPVLCPVCTS…KLICGLIHAC (77 aa). Cystine bridges form between Cys-29–Cys-101, Cys-32–Cys-95, and Cys-59–Cys-70.

As to quaternary structure, monomer. Homodimer. Hexamer; formed during insertion in the membrane.

The protein localises to the cytoplasmic granule. In terms of biological role, forms pores in the cell membrane of host cells. Has antibacterial activity against M.luteus, no activity against E.coli. Implicated in the cytolytic activity of the parasite. This Entamoeba histolytica (strain ATCC 30459 / HM-1:IMSS / ABRM) protein is Pore-forming peptide amoebapore C.